A 210-amino-acid polypeptide reads, in one-letter code: Na(+)-translocating NADH-quinone reductase subunit D (210 aa).

Helical transmembrane passes span 10 to 30, 42 to 62, 72 to 92, 103 to 123, 143 to 163, and 178 to 198; these read VLFG…GVCS, LVMS…ISMI, IIVQ…ILKA, VFVG…AFAM, FVLI…ILGF, and NGLL…IWFI.

The protein belongs to the NqrDE/RnfAE family. Composed of six subunits; NqrA, NqrB, NqrC, NqrD, NqrE and NqrF.

It is found in the cell inner membrane. The catalysed reaction is a ubiquinone + n Na(+)(in) + NADH + H(+) = a ubiquinol + n Na(+)(out) + NAD(+). NQR complex catalyzes the reduction of ubiquinone-1 to ubiquinol by two successive reactions, coupled with the transport of Na(+) ions from the cytoplasm to the periplasm. NqrA to NqrE are probably involved in the second step, the conversion of ubisemiquinone to ubiquinol. The chain is Na(+)-translocating NADH-quinone reductase subunit D from Pseudoalteromonas atlantica (strain T6c / ATCC BAA-1087).